The following is a 392-amino-acid chain: Stilbene synthase 6 (392 aa).

Residue 55–58 (KFNR) participates in substrate binding. The active site involves C164. Substrate contacts are provided by residues L267 and 305-307 (GGP).

It belongs to the thiolase-like superfamily. Chalcone/stilbene synthases family. As to quaternary structure, homodimer.

It localises to the cytoplasm. The enzyme catalyses 4-coumaroyl-CoA + 3 malonyl-CoA + 3 H(+) = trans-resveratrol + 4 CO2 + 4 CoA. It functions in the pathway phytoalexin biosynthesis; 3,4',5-trihydroxystilbene biosynthesis; 3,4',5-trihydroxystilbene from trans-4-coumarate: step 2/2. In terms of biological role, mediates resistance to pathogens which are sensitive to stilbenes. The polypeptide is Stilbene synthase 6 (STS) (Vitis vinifera (Grape)).